The chain runs to 101 residues: MPSLLFCGPKLAACGIVLSVWGVIMLSMLGIFFSAKSAVLIEDVPFTEEDIRNDKDPPQIIYGLYNQVGINCFIAAAIYVGVGAVSLCQVRLNKRQEYMVT.

2 consecutive transmembrane segments (helical) span residues Ala-13–Phe-33 and Val-68–Cys-88.

This sequence belongs to the RNase K family.

The protein localises to the membrane. Its function is as follows. Endoribonuclease which preferentially cleaves ApU and ApG phosphodiester bonds. This is Ribonuclease kappa-B (rnasekb) from Danio rerio (Zebrafish).